The chain runs to 80 residues: Large ribosomal subunit protein uL29 (80 aa).

Belongs to the universal ribosomal protein uL29 family.

The polypeptide is Large ribosomal subunit protein uL29 (Mycobacterium marinum (strain ATCC BAA-535 / M)).